The sequence spans 470 residues: MGIWTSGTDIFLSLWEIYVSPRSPGWMDFIQHLGVCCLVALISVGLLSVAACWFLPSIIAAAASWIITCVLLCCSKHARCFILLVFLSCGLREGRNALIAAGTGIVILGHVENIFHNFKGLLDGMTCNLRAKSFSIHFPLLKKYIEAIQWIYGLATPLSVFDDLVSWNQTLAVSLFSPSHVLEAQLNDSKGEVLSVLYQMATTTEVLSSLGQKLLAFAGLSLVLLGTGLFMKRFLGPCGWKYENIYITRQFVQFDERERHQQRPCVLPLNKEERRKYVIIPTFWPTPKERKNLGLFFLPILIHLCIWVLFAAVDYLLYRLIFSVSKQFQSLPGFEVHLKLHGEKQGTQDIIHDSSFNISVFEPNCIPKPKFLLSETWVPLSVILLILVMLGLLSSILMQLKILVSASFYPSVERKRIQYLHAKLLKKRSKQPLGEVKRRLSLYLTKIHFWLPVLKMIRKKQMDMASADKS.

Over 1–34 (MGIWTSGTDIFLSLWEIYVSPRSPGWMDFIQHLG) the chain is Cytoplasmic. Residues 35–55 (VCCLVALISVGLLSVAACWFL) form a helical membrane-spanning segment. At 56–57 (PS) the chain is on the extracellular side. Residues 58–78 (IIAAAASWIITCVLLCCSKHA) traverse the membrane as a helical segment. Topologically, residues 79–97 (RCFILLVFLSCGLREGRNA) are cytoplasmic. The chain crosses the membrane as a helical span at residues 98 to 118 (LIAAGTGIVILGHVENIFHNF). Topologically, residues 119-209 (KGLLDGMTCN…MATTTEVLSS (91 aa)) are extracellular. A helical transmembrane segment spans residues 210–230 (LGQKLLAFAGLSLVLLGTGLF). The Cytoplasmic portion of the chain corresponds to 231–292 (MKRFLGPCGW…FWPTPKERKN (62 aa)). The helical transmembrane segment at 293–313 (LGLFFLPILIHLCIWVLFAAV) threads the bilayer. Topologically, residues 314-376 (DYLLYRLIFS…PKPKFLLSET (63 aa)) are extracellular. A helical membrane pass occupies residues 377–397 (WVPLSVILLILVMLGLLSSIL). Over 398–470 (MQLKILVSAS…QMDMASADKS (73 aa)) the chain is Cytoplasmic.

Monomer. Homodimer. Isoform 1 interacts (via the C-terminus cytoplasmic tail) with OS9 isoform 1 (via the C-terminus tail); the interaction induces DCSTAMP redistribution to the endoplasmic reticulum-Golgi intermediate compartment. Isoform 1 interacts (via the C-terminus cytoplasmic tail) with OS9 isoform 2 (via the C-terminus tail). Interacts with CREB3. In terms of processing, glycosylated. Preferentially expressed by dendritic cells (DCs). Detected in both immature and mature DCs. Highly expressed in lymph nodes, lung, kidney and liver. Expressed at lower levels in pancreas, bone marrow, spleen, leukocytes, in freshly isolated peripheral blood mononuclear cells (PBMC) and B-cells. Not expressed in freshly isolated monocytes.

The protein resides in the cell membrane. It is found in the endoplasmic reticulum membrane. Its subcellular location is the endoplasmic reticulum-Golgi intermediate compartment membrane. The protein localises to the endosome. Functionally, probable cell surface receptor that plays several roles in cellular fusion, cell differentiation, bone and immune homeostasis. Plays a role in TNFSF11-mediated osteoclastogenesis. Cooperates with OCSTAMP in modulating cell-cell fusion in both osteoclasts and foreign body giant cells (FBGCs). Participates in osteoclast bone resorption. Involved in inducing the expression of tartrate-resistant acid phosphatase in osteoclast precursors. Plays a role in haematopoietic stem cell differentiation of bone marrow cells toward the myeloid lineage. Inhibits the development of neutrophilic granulocytes. Plays also a role in the regulation of dendritic cell (DC) antigen presentation activity by controlling phagocytic activity. Involved in the maintenance of immune self-tolerance and avoidance of autoimmune reactions. This Homo sapiens (Human) protein is Dendritic cell-specific transmembrane protein (DCSTAMP).